The primary structure comprises 128 residues: Large ribosomal subunit protein bL19 (128 aa).

The protein belongs to the bacterial ribosomal protein bL19 family.

This protein is located at the 30S-50S ribosomal subunit interface and may play a role in the structure and function of the aminoacyl-tRNA binding site. The chain is Large ribosomal subunit protein bL19 from Verminephrobacter eiseniae (strain EF01-2).